Here is a 1388-residue protein sequence, read N- to C-terminus: DNA-directed RNA polymerase subunit beta' (1388 aa).

Residues cysteine 76, cysteine 78, cysteine 91, and cysteine 94 each contribute to the Zn(2+) site. Residues aspartate 467, aspartate 469, and aspartate 471 each coordinate Mg(2+). Zn(2+) is bound by residues cysteine 810, cysteine 884, cysteine 891, and cysteine 894.

It belongs to the RNA polymerase beta' chain family. In terms of assembly, the RNAP catalytic core consists of 2 alpha, 1 beta, 1 beta' and 1 omega subunit. When a sigma factor is associated with the core the holoenzyme is formed, which can initiate transcription. It depends on Mg(2+) as a cofactor. Zn(2+) serves as cofactor.

The catalysed reaction is RNA(n) + a ribonucleoside 5'-triphosphate = RNA(n+1) + diphosphate. DNA-dependent RNA polymerase catalyzes the transcription of DNA into RNA using the four ribonucleoside triphosphates as substrates. This chain is DNA-directed RNA polymerase subunit beta', found in Lawsonia intracellularis (strain PHE/MN1-00).